A 447-amino-acid polypeptide reads, in one-letter code: Alkylglycerol monooxygenase (447 aa).

The next 2 membrane-spanning stretches (helical) occupy residues 43–63 (ATPF…ILKG) and 111–131 (WDST…YYWF). The Fatty acid hydroxylase domain occupies 119-249 (FTFLGVDFGY…LIIWDRIFGT (131 aa)). Positions 132-136 (HRMAH) match the Histidine box-1 motif. Positions 145–149 (HQAHH) match the Histidine box-2 motif. Residues 170 to 190 (SWVFYCPLALFIPPSVFAVHI) traverse the membrane as a helical segment. The Histidine box-3 motif lies at 221-225 (HRVHH). Transmembrane regions (helical) follow at residues 340 to 360 (VLQF…TAVL), 363 to 383 (VTLL…GFLL), and 413 to 433 (IPSL…FWGV).

The protein belongs to the sterol desaturase family. TMEM195 subfamily. The cofactor is Fe cation. In terms of tissue distribution, highly expressed in lever and small intestine.

It is found in the endoplasmic reticulum membrane. It carries out the reaction 1-O-(1,2-saturated-alkyl)-sn-glycerol + (6R)-L-erythro-5,6,7,8-tetrahydrobiopterin + O2 = a 1-(1-hydroxyalkyl)-sn-glycerol + (6R)-L-erythro-6,7-dihydrobiopterin + H2O. Functionally, glyceryl-ether monooxygenase that cleaves the O-alkyl bond of ether lipids. Ether lipids are essential components of brain membranes. The sequence is that of Alkylglycerol monooxygenase (Agmo) from Mus musculus (Mouse).